Here is a 109-residue protein sequence, read N- to C-terminus: Spermidine export protein MdtI (109 aa).

The next 4 helical transmembrane spans lie at 6-26 (WIHGAWLGLAIMLEIAANVLL), 36-56 (CYGILSLAAVLAAFSALSQAV), 64-84 (AYALWGGFGIAATLAAGWVLF), and 88-108 (LNPKGWVGVILLLAGMVMIKF).

Belongs to the drug/metabolite transporter (DMT) superfamily. Small multidrug resistance (SMR) (TC 2.A.7.1) family. MdtI subfamily. As to quaternary structure, forms a complex with MdtJ.

It localises to the cell inner membrane. Catalyzes the excretion of spermidine. This Salmonella choleraesuis (strain SC-B67) protein is Spermidine export protein MdtI.